The primary structure comprises 335 residues: Glyoxylate reductase (335 aa).

NADP(+) contacts are provided by residues 159–162 (MGRI), 181–183 (SRS), and 240–242 (TGR). Residues arginine 242 and glutamate 271 contribute to the active site. The active-site Proton donor is histidine 290. Position 290 to 292 (290 to 292 (HAA)) interacts with NADP(+).

It belongs to the D-isomer specific 2-hydroxyacid dehydrogenase family. GyaR subfamily. In terms of assembly, homodimer.

The protein localises to the cytoplasm. The catalysed reaction is glycolate + NAD(+) = glyoxylate + NADH + H(+). The protein is Glyoxylate reductase of Aeropyrum pernix (strain ATCC 700893 / DSM 11879 / JCM 9820 / NBRC 100138 / K1).